We begin with the raw amino-acid sequence, 288 residues long: Elongation factor Ts (288 aa).

The interval 82-85 is involved in Mg(2+) ion dislocation from EF-Tu; it reads TDFV.

The protein belongs to the EF-Ts family.

Its subcellular location is the cytoplasm. Its function is as follows. Associates with the EF-Tu.GDP complex and induces the exchange of GDP to GTP. It remains bound to the aminoacyl-tRNA.EF-Tu.GTP complex up to the GTP hydrolysis stage on the ribosome. This Pelodictyon phaeoclathratiforme (strain DSM 5477 / BU-1) protein is Elongation factor Ts.